The chain runs to 1356 residues: DNA-directed RNA polymerase subunit beta (1356 aa).

It belongs to the RNA polymerase beta chain family. The RNAP catalytic core consists of 2 alpha, 1 beta, 1 beta' and 1 omega subunit. When a sigma factor is associated with the core the holoenzyme is formed, which can initiate transcription.

The catalysed reaction is RNA(n) + a ribonucleoside 5'-triphosphate = RNA(n+1) + diphosphate. Its function is as follows. DNA-dependent RNA polymerase catalyzes the transcription of DNA into RNA using the four ribonucleoside triphosphates as substrates. In Caulobacter vibrioides (strain ATCC 19089 / CIP 103742 / CB 15) (Caulobacter crescentus), this protein is DNA-directed RNA polymerase subunit beta.